Here is a 94-residue protein sequence, read N- to C-terminus: NADH-ubiquinone oxidoreductase 10.5 kDa subunit (94 aa).

It belongs to the complex I NDUFA2 subunit family. Complex I is composed of about 40 different subunits.

The protein localises to the mitochondrion inner membrane. In terms of biological role, accessory subunit of the mitochondrial membrane respiratory chain NADH dehydrogenase (Complex I), that is believed not to be involved in catalysis. Complex I functions in the transfer of electrons from NADH to the respiratory chain. The immediate electron acceptor for the enzyme is believed to be ubiquinone. The polypeptide is NADH-ubiquinone oxidoreductase 10.5 kDa subunit (nuo-10.5) (Neurospora crassa (strain ATCC 24698 / 74-OR23-1A / CBS 708.71 / DSM 1257 / FGSC 987)).